Consider the following 1177-residue polypeptide: DNA-directed RNA polymerase subunit beta (1177 aa).

Residues 1147-1161 (DDTEIEMRDTEDDDD) show a composition bias toward acidic residues. The interval 1147–1177 (DDTEIEMRDTEDDDDHQSADKLNVEVETTKE) is disordered. Residues 1162 to 1177 (HQSADKLNVEVETTKE) are compositionally biased toward basic and acidic residues.

Belongs to the RNA polymerase beta chain family. The RNAP catalytic core consists of 2 alpha, 1 beta, 1 beta' and 1 omega subunit. When a sigma factor is associated with the core the holoenzyme is formed, which can initiate transcription.

It carries out the reaction RNA(n) + a ribonucleoside 5'-triphosphate = RNA(n+1) + diphosphate. Its function is as follows. DNA-dependent RNA polymerase catalyzes the transcription of DNA into RNA using the four ribonucleoside triphosphates as substrates. This Bacillus anthracis (strain A0248) protein is DNA-directed RNA polymerase subunit beta.